We begin with the raw amino-acid sequence, 378 residues long: Erythronate-4-phosphate dehydrogenase (378 aa).

Positions 45 and 66 each coordinate substrate. Residues Asp146 and Thr175 each contribute to the NAD(+) site. The active site involves Arg208. Asp232 is an NAD(+) binding site. Residue Glu237 is part of the active site. His254 acts as the Proton donor in catalysis. An NAD(+)-binding site is contributed by Gly257. Residue Tyr258 coordinates substrate.

This sequence belongs to the D-isomer specific 2-hydroxyacid dehydrogenase family. PdxB subfamily. Homodimer.

The protein resides in the cytoplasm. The enzyme catalyses 4-phospho-D-erythronate + NAD(+) = (R)-3-hydroxy-2-oxo-4-phosphooxybutanoate + NADH + H(+). It functions in the pathway cofactor biosynthesis; pyridoxine 5'-phosphate biosynthesis; pyridoxine 5'-phosphate from D-erythrose 4-phosphate: step 2/5. Functionally, catalyzes the oxidation of erythronate-4-phosphate to 3-hydroxy-2-oxo-4-phosphonooxybutanoate. The chain is Erythronate-4-phosphate dehydrogenase from Escherichia coli O127:H6 (strain E2348/69 / EPEC).